A 491-amino-acid chain; its full sequence is LETM1 domain-containing protein LETM2, mitochondrial (491 aa).

The transit peptide at 1–25 (MAFYSYNSVLAIARTRFPSHFVHPT) directs the protein to the mitochondrion. At 26 to 177 (CSSYSPSCAF…LLRTCVDFFR (152 aa)) the chain is on the mitochondrial intermembrane side. Residues 94 to 109 (EQATKHPQVTSPQATK) are compositionally biased toward polar residues. The disordered stretch occupies residues 94 to 115 (EQATKHPQVTSPQATKETGMEI). Residues 178–198 (LVPFMVFLIVPFMEFLLPVFL) traverse the membrane as a helical segment. The Mitochondrial matrix segment spans residues 199-491 (KLFPEMLPST…QNSKASSKGA (293 aa)). Residues 208-235 (TFESESKKEEKQKKKMAVKLELAKFLQE) adopt a coiled-coil conformation. The region spanning 221-438 (KKMAVKLELA…LAPQLKGTKD (218 aa)) is the Letm1 RBD domain. The disordered stretch occupies residues 435-491 (GTKDEDFIQPPPVTSSPITPSTPISLPKGPITSSEEPTLQAKSQMTAQNSKASSKGA). Positions 449 to 461 (SSPITPSTPISLP) are enriched in low complexity. The span at 465–491 (ITSSEEPTLQAKSQMTAQNSKASSKGA) shows a compositional bias: polar residues.

It is found in the mitochondrion inner membrane. The protein is LETM1 domain-containing protein LETM2, mitochondrial (LETM2) of Homo sapiens (Human).